A 278-amino-acid polypeptide reads, in one-letter code: 3-methyl-2-oxobutanoate hydroxymethyltransferase (278 aa).

Mg(2+)-binding residues include aspartate 43 and aspartate 82. Residues 43 to 44 (DS), aspartate 82, and lysine 112 contribute to the 3-methyl-2-oxobutanoate site. Glutamate 114 is a Mg(2+) binding site. Catalysis depends on glutamate 181, which acts as the Proton acceptor.

The protein belongs to the PanB family. As to quaternary structure, homodecamer; pentamer of dimers. The cofactor is Mg(2+).

Its subcellular location is the cytoplasm. The catalysed reaction is 3-methyl-2-oxobutanoate + (6R)-5,10-methylene-5,6,7,8-tetrahydrofolate + H2O = 2-dehydropantoate + (6S)-5,6,7,8-tetrahydrofolate. It participates in cofactor biosynthesis; (R)-pantothenate biosynthesis; (R)-pantoate from 3-methyl-2-oxobutanoate: step 1/2. Catalyzes the reversible reaction in which hydroxymethyl group from 5,10-methylenetetrahydrofolate is transferred onto alpha-ketoisovalerate to form ketopantoate. This chain is 3-methyl-2-oxobutanoate hydroxymethyltransferase, found in Bacillus cereus (strain AH187).